A 462-amino-acid polypeptide reads, in one-letter code: Glutamate--tRNA ligase (462 aa).

The 'HIGH' region motif lies at 11–21 (PSPTGFIHLGN). The span at 120–131 (KPRYDGTWRPEP) shows a compositional bias: basic and acidic residues. A disordered region spans residues 120–140 (KPRYDGTWRPEPGKTLPPIPA). The 'KMSKS' region signature appears at 243-247 (KMSKR). Position 246 (lysine 246) interacts with ATP.

Belongs to the class-I aminoacyl-tRNA synthetase family. Glutamate--tRNA ligase type 1 subfamily. Monomer.

The protein resides in the cytoplasm. It catalyses the reaction tRNA(Glu) + L-glutamate + ATP = L-glutamyl-tRNA(Glu) + AMP + diphosphate. Its function is as follows. Catalyzes the attachment of glutamate to tRNA(Glu) in a two-step reaction: glutamate is first activated by ATP to form Glu-AMP and then transferred to the acceptor end of tRNA(Glu). This chain is Glutamate--tRNA ligase, found in Polaromonas sp. (strain JS666 / ATCC BAA-500).